The sequence spans 164 residues: Anthrone oxygenase AgnL2 (164 aa).

A run of 3 helical transmembrane segments spans residues 11 to 31 (VVTG…AVPV), 48 to 70 (RMYH…LYAY), and 85 to 105 (VFAL…LCMV).

This sequence belongs to the anthrone oxygenase family.

The protein resides in the membrane. The catalysed reaction is emodin anthrone + O2 = emodin + H2O + H(+). Its pathway is secondary metabolite biosynthesis. Its function is as follows. Anthrone oxygenase; part of the gene cluster that mediates the biosynthesis of agnestins, dihydroxy-xanthone metabolites. The pathway begins with the assembly and cyclization of atrochrysone thioester by the non-reducing polyketide synthase Agnpks1. The atrochrysone carboxyl ACP thioesterase AgnL7 then breaks the thioester bond and releases the atrochrysone carboxylic acid as the first enzyme-free intermediate. The decarboxylase AgnL1 then catalyzes the concerted decarboxylation-elimination required to convert atochrysone carboxylic acid into emodin anthrone, which is further oxidized to emodin by the anthrone oxygenase AgnL2. Emodin then undergoes reduction catalyzed by the oxidoreductase AgnL4 to yield the dihydroquinone tautomer which is the substrate for reduction by the short chain dehydrogenase AgnL6 reduction to produce hydroxyketone, followed by AgnL8 dehydration and likely spontaneous autoxidation to chrysophanol. Baeyer-Villiger oxidation by the oxidase AgnL3 leads to monodictyphenone via cleavage of the C-10/C-10a bond of chrysophanol. Alternative cleavage at the C-4a/C-10 bond of chrysophanol also leads to the formation some cephalone F. Further conversion to agnestins A and B, requires reduction to dihydro-monodictyphenone, oxidation to agnestin C probably via an epoxide, and rearrangement to either agnestin A or agnestin B directly, although agnestin A or agnestin B can also interconvert. Within the cluster, AgnR1 is the only unassigned oxidoreductase present which could be involved in this conversion. However, AgnR1 seems not to be involved in this step, and thus genes involved in the proposed oxidation/reduction may be located elsewhere on the genome. Further agnestin A derivatives are probably formed by spontaneous decarboxylations, dehydrations and methanolysis reactions. The polypeptide is Anthrone oxygenase AgnL2 (Paecilomyces divaricatus (Penicillium divaricatum)).